The sequence spans 598 residues: Probable translation initiation factor IF-2 (598 aa).

The region spanning 3-225 (LRCPIVSVLG…GLAQKFLEQK (223 aa)) is the tr-type G domain. The interval 12–19 (GHVDHGKT) is G1. 12 to 19 (GHVDHGKT) contributes to the GTP binding site. Residues 37–41 (GITQH) form a G2 region. Positions 76 to 79 (DTPG) are G3. GTP is bound by residues 76–80 (DTPGH) and 130–133 (NKLD). The tract at residues 130–133 (NKLD) is G4. A G5 region spans residues 200–202 (SAM).

The protein belongs to the TRAFAC class translation factor GTPase superfamily. Classic translation factor GTPase family. IF-2 subfamily.

Its function is as follows. Function in general translation initiation by promoting the binding of the formylmethionine-tRNA to ribosomes. Seems to function along with eIF-2. This is Probable translation initiation factor IF-2 from Methanococcus maripaludis (strain C6 / ATCC BAA-1332).